Here is a 519-residue protein sequence, read N- to C-terminus: MKAFLLTLLAQLCSASLVPEREKDPEYWRQQAQETLRDALRLQHLNQNVAKNLILFLGDGMGVSTVTAARILKGQLQHRKGEESLLEMDKFPYVALAKTYNTNAQVPDSAGTATAYLCGVKANEGTVGVSAGVTRDRCNTTKGQEVTSILRWAKDEGKAVGIVTTTRVTHATPSAAYAHSANRDWYSDGEMPLDALEGGCKDIARQLVDNIPDIEVILGGGRKYMFPKNTSDVEYPQEERHRGTRLDGKDLVQAWHDTKPAGKVAKYVWHRRELLALNVSRVDFLLGLFEPGDMVYELDRNNETDPSLSEMVAVAIRMLQKNPRGFFLLVEGGRIDHGHHEGKAKQALHEAVELDRAVGLAGRLTSPRDTLSVVTADHSHVFTFGGYTPRGNPIFGLAPMQSDVDRKPFTSILYGNGPGYKIVGGERENVSAVDFAHANYQAQAAVPLRQETHGGEDVAVFARGPMAHLLHGVDEQNYIPHAMAYAACIGPNRAHCSSAARPAATATLLPVLLLLLLLC.

The N-terminal stretch at 1–16 (MKAFLLTLLAQLCSAS) is a signal peptide. Asp59 is a Mg(2+) binding site. 2 residues coordinate Zn(2+): Asp59 and Ser109. The active-site Phosphoserine intermediate is the Ser109. Residues Cys138 and Cys200 are joined by a disulfide bond. The N-linked (GlcNAc...) asparagine glycan is linked to Asn139. Thr172 lines the Mg(2+) pocket. A glycan (N-linked (GlcNAc...) asparagine) is linked at Asn229. Glu234 contributes to the Ca(2+) binding site. Residue Asn278 is glycosylated (N-linked (GlcNAc...) asparagine). Phe289 and Glu290 together coordinate Ca(2+). An N-linked (GlcNAc...) asparagine glycan is attached at Asn302. Residue Asp305 participates in Ca(2+) binding. A Mg(2+)-binding site is contributed by Glu331. Positions 336, 340, 377, and 378 each coordinate Zn(2+). Residue Asn429 is glycosylated (N-linked (GlcNAc...) asparagine). His453 serves as a coordination point for Zn(2+). The cysteines at positions 488 and 496 are disulfide-linked. Ser498 carries GPI-anchor amidated serine lipidation. Residues 499 to 519 (AARPAATATLLPVLLLLLLLC) constitute a propeptide, removed in mature form.

Belongs to the alkaline phosphatase family. Homodimer. Mg(2+) is required as a cofactor. The cofactor is Zn(2+). Ca(2+) serves as cofactor.

Its subcellular location is the cell membrane. The protein resides in the extracellular vesicle membrane. The catalysed reaction is a phosphate monoester + H2O = an alcohol + phosphate. The enzyme catalyses diphosphate + H2O = 2 phosphate + H(+). It carries out the reaction pyridoxal 5'-phosphate + H2O = pyridoxal + phosphate. It catalyses the reaction phosphoethanolamine + H2O = ethanolamine + phosphate. The catalysed reaction is ATP + H2O = ADP + phosphate + H(+). The enzyme catalyses ADP + H2O = AMP + phosphate + H(+). It carries out the reaction AMP + H2O = adenosine + phosphate. Functionally, alkaline phosphatase that metabolizes various phosphate compounds and plays a key role in skeletal mineralization and adaptive thermogenesis. Has broad substrate specificity and can hydrolyze a considerable variety of compounds: however, only a few substrates, such as diphosphate (inorganic pyrophosphate; PPi) and pyridoxal 5'-phosphate (PLP) are natural substrates. Plays an essential role in skeletal and dental mineralization via its ability to hydrolyze extracellular diphosphate, a potent mineralization inhibitor, to phosphate: it thereby promotes hydroxyapatite crystal formation and increases inorganic phosphate concentration. Catalyzes dephosphorylation of PLP to pyridoxal (PL), the transportable form of vitamin B6, in order to provide a sufficient amount of PLP in the brain, an essential cofactor for enzymes catalyzing the synthesis of diverse neurotransmitters. Additionally, also able to mediate ATP degradation in a stepwise manner to adenosine, thereby regulating the availability of ligands for purinergic receptors. Involved in the establishment and growth of feather germs. The polypeptide is Alkaline phosphatase, tissue-nonspecific isozyme (ALPL) (Gallus gallus (Chicken)).